A 305-amino-acid chain; its full sequence is Deoxyhypusine hydroxylase (305 aa).

2 HEAT-like PBS-type repeats span residues Leu54 to Asp80 and Val87 to Asp113. Residues His56, His89, and Glu90 each coordinate Fe cation. The tract at residues Glu137–Lys160 is disordered. 3 HEAT-like PBS-type repeats span residues Asp178–Cys204, Phe209–Lys235, and Val242–Asp268. Fe cation contacts are provided by His211, His244, and Glu245.

The protein belongs to the deoxyhypusine hydroxylase family. The cofactor is Fe(2+).

The enzyme catalyses [eIF5A protein]-deoxyhypusine + AH2 + O2 = [eIF5A protein]-hypusine + A + H2O. The protein operates within protein modification; eIF5A hypusination. Catalyzes the hydroxylation of the N(6)-(4-aminobutyl)-L-lysine intermediate produced by deoxyhypusine synthase/DHPS on a critical lysine of the eukaryotic translation initiation factor 5A/eIF-5A. This is the second step of the post-translational modification of that lysine into an unusual amino acid residue named hypusine. Hypusination is unique to mature eIF-5A factor and is essential for its function. In Danio rerio (Zebrafish), this protein is Deoxyhypusine hydroxylase (dohh).